The chain runs to 737 residues: MEIRGLLMGRLRLGRRMVPLGLLGVTALLLILPPFALVQGRHHELNNGAAIGSHQLSAAAGVGLASQSAQSGSLASGVMSSVPAAGASSSSSSSLLSSSAEDDVARITLSKDADAFFTPYIGHGESVRIIDAELGTLEHVHSGATPRRRGLTRRESNSDANDNDPLVVNTDKGRIRGITVDAPSGKKVDVWLGIPYAQPPVGPLRFRHPRPAEKWTGVLNTTTPPNSCVQIVDTVFGDFPGATMWNPNTPLSEDCLYINVVAPRPRPKNAAVMLWIFGGGFYSGTATLDVYDHRALASEENVIVVSLQYRVASLGFLFLGTPEAPGNAGLFDQNLALRWVRDNIHRFGGDPSRVTLFGESAGAVSVSLHLLSALSRDLFQRAILQSGSPTAPWALVSREEATLRALRLAEAVGCPHEPSKLSDAVECLRGKDPHVLVNNEWGTLGICEFPFVPVVDGAFLDETPQRSLASGRFKKTEILTGSNTEEGYYFIIYYLTELLRKEEGVTVTREEFLQAVRELNPYVNGAARQAIVFEYTDWTEPDNPNSNRDALDKMVGDYHFTCNVNEFAQRYAEEGNNVYMYLYTHRSKGNPWPRWTGVMHGDEINYVFGEPLNPTLGYTEDEKDFSRKIMRYWSNFAKTGNPNPNTASSEFPEWPKHTAHGRHYLELGLNTSFVGRGPRLRQCAFWKKYLPQLVAATSNLPGPAPPSEPCESSAFFYRPDLIVLLVSLLTATVRFIQ.

The N-terminal stretch at 1–38 (MEIRGLLMGRLRLGRRMVPLGLLGVTALLLILPPFALV) is a signal peptide. The segment at 141 to 168 (HSGATPRRRGLTRRESNSDANDNDPLVV) is disordered. N-linked (GlcNAc...) asparagine glycosylation is present at N220. C228 and C255 are joined by a disulfide. The Acyl-ester intermediate role is filled by S360. An intrachain disulfide couples C414 to C427. Active-site charge relay system residues include E486 and H600. C562 and C683 form a disulfide bridge. N670 is a glycosylation site (N-linked (GlcNAc...) asparagine).

Belongs to the type-B carboxylesterase/lipase family.

Its subcellular location is the synapse. The catalysed reaction is acetylcholine + H2O = choline + acetate + H(+). Rapidly hydrolyzes choline released into the synapse. The chain is Acetylcholinesterase (Ace) from Anopheles gambiae (African malaria mosquito).